An 80-amino-acid polypeptide reads, in one-letter code: Histone H1.M6.1 (80 aa).

The segment at 1 to 80 is disordered; sequence MSDAAVPPKK…KAVKKAPKKK (80 aa). Basic residues predominate over residues 11 to 80; it reads ASPKKAAAKK…KAVKKAPKKK (70 aa).

Its subcellular location is the nucleus. The protein resides in the chromosome. In Trypanosoma cruzi, this protein is Histone H1.M6.1.